Consider the following 301-residue polypeptide: Ribosomal protein L11 methyltransferase (301 aa).

S-adenosyl-L-methionine contacts are provided by T152, G173, D195, and N236.

The protein belongs to the methyltransferase superfamily. PrmA family.

It localises to the cytoplasm. The enzyme catalyses L-lysyl-[protein] + 3 S-adenosyl-L-methionine = N(6),N(6),N(6)-trimethyl-L-lysyl-[protein] + 3 S-adenosyl-L-homocysteine + 3 H(+). In terms of biological role, methylates ribosomal protein L11. The protein is Ribosomal protein L11 methyltransferase of Dictyoglomus thermophilum (strain ATCC 35947 / DSM 3960 / H-6-12).